A 414-amino-acid chain; its full sequence is ATP-dependent Clp protease ATP-binding subunit ClpX (414 aa).

Residues 1–51 (MADSKTKKKCSFCGRSENEVGFLITGMNGYICDSCATQAYEITQEALGEGR) enclose the ClpX-type ZB domain. Cysteine 10, cysteine 13, cysteine 32, and cysteine 35 together coordinate Zn(2+). Residue 120 to 127 (STGTGKTL) coordinates ATP.

It belongs to the ClpX chaperone family. In terms of assembly, component of the ClpX-ClpP complex. Forms a hexameric ring that, in the presence of ATP, binds to fourteen ClpP subunits assembled into a disk-like structure with a central cavity, resembling the structure of eukaryotic proteasomes.

Functionally, ATP-dependent specificity component of the Clp protease. It directs the protease to specific substrates. Can perform chaperone functions in the absence of ClpP. This Bacteroides thetaiotaomicron (strain ATCC 29148 / DSM 2079 / JCM 5827 / CCUG 10774 / NCTC 10582 / VPI-5482 / E50) protein is ATP-dependent Clp protease ATP-binding subunit ClpX.